The chain runs to 404 residues: AT-hook motif nuclear-localized protein 3 (404 aa).

Disordered stretches follow at residues 1-51 (MEER…VPPT), 70-100 (PFSL…PDGT), and 113-133 (SVPL…GKSN). The segment covering 7–19 (TNINNNITSSFGL) has biased composition (polar residues). The segment covering 35 to 51 (DPPPRPENPNPFLVPPT) has biased composition (pro residues). The span at 71-83 (FSLTMPTENTSAE) shows a compositional bias: polar residues. The Bipartite nuclear localization signal signature appears at 86–94 (KKKRGRPRK). A DNA-binding region (a.T hook) is located at residues 86–98 (KKKRGRPRKYNPD). Residues 123 to 133 (RKRGRGRGKSN) show a composition bias toward basic residues. The region spanning 163 to 308 (GANFTPHVLI…RFGAQPSSIS (146 aa)) is the PPC domain. Residues 359–404 (PFSSIPVGGGGGGEVGEEEGEEDDDELEGEDEEFGGDSQSDNEIPS) form a disordered region. The segment covering 373-393 (VGEEEGEEDDDELEGEDEEFG) has biased composition (acidic residues).

As to quaternary structure, homodimer. Interacts with AHL4. In terms of tissue distribution, expressed in both procambium and xylem precursors of the root meristem. Also detected in the endodermis in the late elongation zone and onwards.

Its subcellular location is the nucleus. In terms of biological role, transcription factor that specifically binds AT-rich DNA sequences related to the nuclear matrix attachment regions (MARs). Acts redundantly with AHL4 to regulate the formation of tissue boundary between the xylem and procambium in the root meristem. The polypeptide is AT-hook motif nuclear-localized protein 3 (Arabidopsis thaliana (Mouse-ear cress)).